The chain runs to 161 residues: Lipoprotein signal peptidase (161 aa).

4 helical membrane-spanning segments follow: residues 8-28 (LKYF…KYLA), 40-60 (ITSF…SLLS), 67-87 (QMIM…YLII), and 91-111 (ITEK…LGNF). Active-site residues include Asp-122 and Asp-140. The helical transmembrane segment at 136-156 (FNIADSAITCGVVILIAASLF) threads the bilayer.

This sequence belongs to the peptidase A8 family.

It is found in the cell inner membrane. It catalyses the reaction Release of signal peptides from bacterial membrane prolipoproteins. Hydrolyzes -Xaa-Yaa-Zaa-|-(S,diacylglyceryl)Cys-, in which Xaa is hydrophobic (preferably Leu), and Yaa (Ala or Ser) and Zaa (Gly or Ala) have small, neutral side chains.. Its pathway is protein modification; lipoprotein biosynthesis (signal peptide cleavage). Its function is as follows. This protein specifically catalyzes the removal of signal peptides from prolipoproteins. The protein is Lipoprotein signal peptidase of Francisella tularensis subsp. tularensis (strain FSC 198).